Consider the following 282-residue polypeptide: Putative 23S rRNA (guanine-N(1)-)-methyltransferase YxjB (282 aa).

4 residues coordinate Zn(2+): cysteine 12, cysteine 15, cysteine 29, and histidine 34. 103–104 (EG) is a binding site for S-adenosyl-L-methionine.

Belongs to the methyltransferase superfamily. RlmA family.

This chain is Putative 23S rRNA (guanine-N(1)-)-methyltransferase YxjB (yxjB), found in Bacillus subtilis (strain 168).